The primary structure comprises 132 residues: Putative apolipoprotein(a)-like protein 2 (132 aa).

A signal peptide spans 1 to 21; it reads MEHKEVVLLLLLFLKSAPTET. Positions 27–105 constitute a Kringle domain; sequence ECYHSNGQSY…RWEYCNLTRC (79 aa). 3 disulfide bridges follow: C28/C105, C49/C88, and C77/C100. N101 carries N-linked (GlcNAc...) asparagine glycosylation.

Expressed in liver but not in other tissues tested.

It is found in the secreted. The polypeptide is Putative apolipoprotein(a)-like protein 2 (LPAL2) (Homo sapiens (Human)).